The sequence spans 147 residues: D-aminoacyl-tRNA deacylase (147 aa).

The Gly-cisPro motif, important for rejection of L-amino acids signature appears at 136–137 (GP).

The protein belongs to the DTD family. As to quaternary structure, homodimer.

It is found in the cytoplasm. The enzyme catalyses glycyl-tRNA(Ala) + H2O = tRNA(Ala) + glycine + H(+). The catalysed reaction is a D-aminoacyl-tRNA + H2O = a tRNA + a D-alpha-amino acid + H(+). Its function is as follows. An aminoacyl-tRNA editing enzyme that deacylates mischarged D-aminoacyl-tRNAs. Also deacylates mischarged glycyl-tRNA(Ala), protecting cells against glycine mischarging by AlaRS. Acts via tRNA-based rather than protein-based catalysis; rejects L-amino acids rather than detecting D-amino acids in the active site. By recycling D-aminoacyl-tRNA to D-amino acids and free tRNA molecules, this enzyme counteracts the toxicity associated with the formation of D-aminoacyl-tRNA entities in vivo and helps enforce protein L-homochirality. This chain is D-aminoacyl-tRNA deacylase, found in Streptococcus sanguinis (strain SK36).